A 146-amino-acid polypeptide reads, in one-letter code: Hemoglobin subunit beta (146 aa).

Residues 2–146 (FLTAEEKGLV…VANALAHKYH (145 aa)) enclose the Globin domain. Serine 44 carries the post-translational modification Phosphoserine. N6-acetyllysine is present on lysine 59. Position 63 (histidine 63) interacts with heme b. Lysine 82 is subject to N6-acetyllysine. Histidine 92 is a heme b binding site. Cysteine 93 carries the post-translational modification S-nitrosocysteine. An N6-acetyllysine modification is found at lysine 144.

The protein belongs to the globin family. Heterotetramer of two alpha chains and two beta chains. As to expression, red blood cells.

In terms of biological role, involved in oxygen transport from the lung to the various peripheral tissues. The sequence is that of Hemoglobin subunit beta (HBB) from Lynx lynx (Eurasian lynx).